Consider the following 678-residue polypeptide: MPDPATYRPAPGSIPVEPGVYRFRDPHGRVIYVGKAKSLRSRLNSYFADISGLAPRTRQMVMTASSVEWTVVGTEVEALQLEYNWIKEFDPRFNIRYRDDKSYPVLAVTLNEEYPRLKVYRGPRRKGVRYFGPYSHAWAIRETVDLLTRVFPARTCSNGVFKRHSQIDRPCLLGYIDKCSAPCVGRVSAEQHRQIVQDFCDFLAGKTDRLIREMEQQMTAAAEDLDFERAARLRDNIGAMRRAMEKQTVVLGDGTDADVVAFADDELEAAVQVFHVRGGRVRGQRGWVIEKSGEPGESTLEYLVEQFLTQFYGDQAELGGASDAGGDEASNPVPKQVLVPVLPETTDELETWLSQLRGSRVALRVPQRGDKRALAETVKRNAEGALNQHKLKRAGDFTARSAALQSIQENLGLQDAPLRIECIDISHVQGTDVVASLVVFEDGLPRKSDYRHFAIREAAGDGRSDDVASIAEVTRRRFHRHLRDMQEPGEMVAEGRSRRFAYPPNLFVVDGGAPQVNAAQAVLDDLGISDVAVIGLAKRLEEVWVPNLDGTAPDPIIFPRNSDGLYLLQRVRDEAHRFAISYHRSKRSKRMTASALDSVRGLGEHRRKALVTHFGSLARLKQATVEEITEVPGIGAATARAVLDALGIEAPPEPGAEAPPDSGAAAAVMGNDQSRVPG.

Positions 16-95 (VEPGVYRFRD…IKEFDPRFNI (80 aa)) constitute a GIY-YIG domain. The UVR domain maps to 208–243 (DRLIREMEQQMTAAAEDLDFERAARLRDNIGAMRRA). Low complexity predominate over residues 649 to 667 (EAPPEPGAEAPPDSGAAAA). Residues 649–678 (EAPPEPGAEAPPDSGAAAAVMGNDQSRVPG) are disordered.

Belongs to the UvrC family. In terms of assembly, interacts with UvrB in an incision complex.

The protein localises to the cytoplasm. Functionally, the UvrABC repair system catalyzes the recognition and processing of DNA lesions. UvrC both incises the 5' and 3' sides of the lesion. The N-terminal half is responsible for the 3' incision and the C-terminal half is responsible for the 5' incision. In Mycolicibacterium gilvum (strain PYR-GCK) (Mycobacterium gilvum (strain PYR-GCK)), this protein is UvrABC system protein C.